The sequence spans 522 residues: Lysine--tRNA ligase (522 aa).

The short motif at Pro44–Thr52 is the 'HIGH' region element. The short motif at Lys290–Ser294 is the 'KMSKS' region element. Lys293 lines the ATP pocket.

It belongs to the class-I aminoacyl-tRNA synthetase family.

It is found in the cytoplasm. It carries out the reaction tRNA(Lys) + L-lysine + ATP = L-lysyl-tRNA(Lys) + AMP + diphosphate. This chain is Lysine--tRNA ligase, found in Rickettsia massiliae (strain Mtu5).